A 260-amino-acid polypeptide reads, in one-letter code: Flap endonuclease Xni (260 aa).

D105 contacts Mg(2+). The region spanning 164–254 (SQFLDLLALA…LKDFRVNGPA (91 aa)) is the 5'-3' exonuclease domain. K(+) is bound by residues L172, A173, P181, I183, and I186. The interaction with DNA stretch occupies residues 185-190 (GIGPKS).

Belongs to the Xni family. Mg(2+) serves as cofactor. K(+) is required as a cofactor.

Has flap endonuclease activity. During DNA replication, flap endonucleases cleave the 5'-overhanging flap structure that is generated by displacement synthesis when DNA polymerase encounters the 5'-end of a downstream Okazaki fragment. The protein is Flap endonuclease Xni of Shewanella sp. (strain ANA-3).